Here is a 110-residue protein sequence, read N- to C-terminus: UPF0122 protein BcerKBAB4_3669 (110 aa).

It belongs to the UPF0122 family.

Might take part in the signal recognition particle (SRP) pathway. This is inferred from the conservation of its genetic proximity to ftsY/ffh. May be a regulatory protein. This is UPF0122 protein BcerKBAB4_3669 from Bacillus mycoides (strain KBAB4) (Bacillus weihenstephanensis).